Reading from the N-terminus, the 598-residue chain is UvrABC system protein C (598 aa).

The 78-residue stretch at 14-91 (DQPGCYLMKD…IHKNNPKYNI (78 aa)) folds into the GIY-YIG domain. Residues 196 to 231 (TEIQDRLQEKMAYAAAHMEFEKAAEFRDQIKAIETV) enclose the UVR domain.

This sequence belongs to the UvrC family. As to quaternary structure, interacts with UvrB in an incision complex.

The protein localises to the cytoplasm. Functionally, the UvrABC repair system catalyzes the recognition and processing of DNA lesions. UvrC both incises the 5' and 3' sides of the lesion. The N-terminal half is responsible for the 3' incision and the C-terminal half is responsible for the 5' incision. This is UvrABC system protein C from Enterococcus faecalis (strain ATCC 700802 / V583).